Consider the following 349-residue polypeptide: N-lysine methyltransferase KMT5A (349 aa).

Positions 18-46 (AAVAATAPGPEMVEQRGPGRPRSDGENVF) are disordered. Position 57 is a phosphoserine (S57). Residues 65–207 (RSPLQEENSV…SEERKKNELI (143 aa)) are disordered. Residues 107 to 119 (VKSDEQKSKDTRR) are compositionally biased toward basic and acidic residues. At T138 the chain carries Phosphothreonine. The segment covering 154-170 (ALKKSLKGKQAPRKKSQ) has biased composition (basic residues). Positions 192 to 207 (SKAELQSEERKKNELI) are enriched in basic and acidic residues. In terms of domain architecture, SET spans 213–334 (EGMKIDLIDG…AGEELLYDYG (122 aa)). S-adenosyl-L-methionine-binding positions include 223–225 (KGR), Y268, and 295–296 (NH).

It belongs to the class V-like SAM-binding methyltransferase superfamily. Histone-lysine methyltransferase family. PR/SET subfamily. As to quaternary structure, interacts with L3MBTL1. Interacts with SIRT2 (phosphorylated form); the interaction is direct, stimulates KMT5A-mediated methyltransferase activity at histone H4 'Lys-20' (H4K20me1) and is increased in a H(2)O(2)-induced oxidative stress-dependent manner. In terms of processing, ubiquitinated and degraded by the DCX(DTL) complex.

It localises to the nucleus. The protein resides in the chromosome. It carries out the reaction L-lysyl(20)-[histone H4] + S-adenosyl-L-methionine = N(6)-methyl-L-lysyl(20)-[histone H4] + S-adenosyl-L-homocysteine + H(+). It catalyses the reaction L-lysyl-[protein] + S-adenosyl-L-methionine = N(6)-methyl-L-lysyl-[protein] + S-adenosyl-L-homocysteine + H(+). Functionally, protein-lysine N-methyltransferase that monomethylates both histones and non-histone proteins. Specifically monomethylates 'Lys-20' of histone H4 (H4K20me1). H4K20me1 is enriched during mitosis and represents a specific tag for epigenetic transcriptional repression. Mainly functions in euchromatin regions, thereby playing a central role in the silencing of euchromatic genes. Required for cell proliferation, probably by contributing to the maintenance of proper higher-order structure of DNA during mitosis. Involved in chromosome condensation and proper cytokinesis. Nucleosomes are preferred as substrate compared to free histones. Mediates monomethylation of p53/TP53 at 'Lys-382', leading to repress p53/TP53-target genes. Plays a negative role in TGF-beta response regulation and a positive role in cell migration. This is N-lysine methyltransferase KMT5A from Mus musculus (Mouse).